We begin with the raw amino-acid sequence, 417 residues long: MTGYFSFPFPRRTSVGVDVGGVAVGGGAPVVVQSMTNTDTADIDQTVAQVAALHRAGSEIVRITVDRDESAAAVPRIHERLQRLGINVPLVGDFHYIGHKLLADHPACAEALAKYRINPGNVGFKDKKDRQFTDIVEMAIKHDKPVRIGVNWGSLDQELLTRLMDDNQDKGFPLTAQEVTREAIVQSAILSAEMAEEIGLGRDKIILSAKVSGVQDLIAVYTELATRSDHALHLGLTEAGMGSKGIVASSAAMGILLQQGIGDTIRISLTPEPNGDRTREVQVAQELLQTMGFRQFVPIVAACPGCGRTTSTVFQELAQNIQADLRKNMPVWREKYPGVENLKVAVMGCIVNGPGESKHADIGISLPGTGETPTAPVFVDGKKAATLRGTSIAADFEKMVTDYIEQRFGRGGKAAAE.

The [4Fe-4S] cluster site is built by cysteine 303, cysteine 306, cysteine 349, and glutamate 356.

The protein belongs to the IspG family. [4Fe-4S] cluster is required as a cofactor.

The enzyme catalyses (2E)-4-hydroxy-3-methylbut-2-enyl diphosphate + oxidized [flavodoxin] + H2O + 2 H(+) = 2-C-methyl-D-erythritol 2,4-cyclic diphosphate + reduced [flavodoxin]. It functions in the pathway isoprenoid biosynthesis; isopentenyl diphosphate biosynthesis via DXP pathway; isopentenyl diphosphate from 1-deoxy-D-xylulose 5-phosphate: step 5/6. Converts 2C-methyl-D-erythritol 2,4-cyclodiphosphate (ME-2,4cPP) into 1-hydroxy-2-methyl-2-(E)-butenyl 4-diphosphate. This chain is 4-hydroxy-3-methylbut-2-en-1-yl diphosphate synthase (flavodoxin), found in Mesorhizobium japonicum (strain LMG 29417 / CECT 9101 / MAFF 303099) (Mesorhizobium loti (strain MAFF 303099)).